Here is a 528-residue protein sequence, read N- to C-terminus: GMP synthase [glutamine-hydrolyzing] (528 aa).

A Glutamine amidotransferase type-1 domain is found at Ser13–Asp204. The active-site Nucleophile is Cys90. Residues His178 and Glu180 contribute to the active site. Residues Trp205–Arg403 enclose the GMPS ATP-PPase domain. Residue Ser232 to Ser238 coordinates ATP.

Homodimer.

It carries out the reaction XMP + L-glutamine + ATP + H2O = GMP + L-glutamate + AMP + diphosphate + 2 H(+). The protein operates within purine metabolism; GMP biosynthesis; GMP from XMP (L-Gln route): step 1/1. Functionally, catalyzes the synthesis of GMP from XMP. This chain is GMP synthase [glutamine-hydrolyzing], found in Prochlorococcus marinus (strain MIT 9215).